We begin with the raw amino-acid sequence, 103 residues long: Protein E7 (103 aa).

Residues 1 to 45 are E7 terminal domain; the sequence is MIGKEVTVRDIVLELSEVQPEVLPVDLFCDEELPNEQQAEEELDI. An LXCXE motif; interaction with host RB1 and TMEM173/STING motif is present at residues 27 to 31; the sequence is LFCDE. Residues 56–94 fold into a zinc finger; it reads CGCSCCEVKLRIFVNATNRGIRTFQELLTGDLQLLCPEC. The Nuclear export signal signature appears at 76-84; that stretch reads IRTFQELLT.

Belongs to the papillomaviridae E7 protein family. As to quaternary structure, homodimer. Homooligomer. Interacts with host RB1; this interaction induces dissociation of RB1-E2F1 complex thereby disrupting RB1 activity. Interacts with host EP300; this interaction represses EP300 transcriptional activity. Interacts with protein E2; this interaction inhibits E7 oncogenic activity. Interacts with host TMEM173/STING; this interaction impairs the ability of TMEM173/STING to sense cytosolic DNA and promote the production of type I interferon (IFN-alpha and IFN-beta). Post-translationally, highly phosphorylated.

The protein localises to the host cytoplasm. It is found in the host nucleus. Plays a role in viral genome replication by driving entry of quiescent cells into the cell cycle. Stimulation of progression from G1 to S phase allows the virus to efficiently use the cellular DNA replicating machinery to achieve viral genome replication. E7 protein has both transforming and trans-activating activities. Induces the disassembly of the E2F1 transcription factor from RB1, with subsequent transcriptional activation of E2F1-regulated S-phase genes. Interferes with host histone deacetylation mediated by HDAC1 and HDAC2, leading to transcription activation. Also plays a role in the inhibition of both antiviral and antiproliferative functions of host interferon alpha. Interaction with host TMEM173/STING impairs the ability of TMEM173/STING to sense cytosolic DNA and promote the production of type I interferon (IFN-alpha and IFN-beta). The polypeptide is Protein E7 (Homo sapiens (Human)).